Here is a 215-residue protein sequence, read N- to C-terminus: ATP phosphoribosyltransferase (215 aa).

Belongs to the ATP phosphoribosyltransferase family. Short subfamily. In terms of assembly, heteromultimer composed of HisG and HisZ subunits.

The protein localises to the cytoplasm. The enzyme catalyses 1-(5-phospho-beta-D-ribosyl)-ATP + diphosphate = 5-phospho-alpha-D-ribose 1-diphosphate + ATP. Its pathway is amino-acid biosynthesis; L-histidine biosynthesis; L-histidine from 5-phospho-alpha-D-ribose 1-diphosphate: step 1/9. Its function is as follows. Catalyzes the condensation of ATP and 5-phosphoribose 1-diphosphate to form N'-(5'-phosphoribosyl)-ATP (PR-ATP). Has a crucial role in the pathway because the rate of histidine biosynthesis seems to be controlled primarily by regulation of HisG enzymatic activity. The sequence is that of ATP phosphoribosyltransferase from Gloeothece citriformis (strain PCC 7424) (Cyanothece sp. (strain PCC 7424)).